The following is a 1294-amino-acid chain: Phosphoribosylformylglycinamidine synthase (1294 aa).

The interval 303–325 is disordered; the sequence is WPGAATGSGGEIRDEGATGRGSK. Residues 305–316, 384–386, and alanine 676 each bind ATP; these read GAATGSGGEIRD and TGY. Residues aspartate 677, glutamate 716, asparagine 720, and aspartate 883 each coordinate Mg(2+). Serine 885 contacts ATP. Residues 1041–1294 form the Glutamine amidotransferase type-1 domain; that stretch reads VAVLREQGVN…MFRNARRQLG (254 aa). Cysteine 1134 acts as the Nucleophile in catalysis. Residues histidine 1259 and glutamate 1261 contribute to the active site.

It in the N-terminal section; belongs to the FGAMS family. As to quaternary structure, monomer.

Its subcellular location is the cytoplasm. It carries out the reaction N(2)-formyl-N(1)-(5-phospho-beta-D-ribosyl)glycinamide + L-glutamine + ATP + H2O = 2-formamido-N(1)-(5-O-phospho-beta-D-ribosyl)acetamidine + L-glutamate + ADP + phosphate + H(+). The protein operates within purine metabolism; IMP biosynthesis via de novo pathway; 5-amino-1-(5-phospho-D-ribosyl)imidazole from N(2)-formyl-N(1)-(5-phospho-D-ribosyl)glycinamide: step 1/2. Functionally, phosphoribosylformylglycinamidine synthase involved in the purines biosynthetic pathway. Catalyzes the ATP-dependent conversion of formylglycinamide ribonucleotide (FGAR) and glutamine to yield formylglycinamidine ribonucleotide (FGAM) and glutamate. This chain is Phosphoribosylformylglycinamidine synthase, found in Pectobacterium atrosepticum (strain SCRI 1043 / ATCC BAA-672) (Erwinia carotovora subsp. atroseptica).